The sequence spans 86 residues: Large ribosomal subunit protein uL23 (86 aa).

It belongs to the universal ribosomal protein uL23 family. In terms of assembly, part of the 50S ribosomal subunit. Contacts protein L29.

Functionally, binds to 23S rRNA. One of the proteins that surrounds the polypeptide exit tunnel on the outside of the ribosome. This is Large ribosomal subunit protein uL23 from Caldivirga maquilingensis (strain ATCC 700844 / DSM 13496 / JCM 10307 / IC-167).